The chain runs to 258 residues: Allene oxide cyclase 3, chloroplastic (258 aa).

The transit peptide at 1 to 56 (MASSSAAMSLESISMTTLNNLSRNHQSHRSSLLGFSRSFQNLGISSNGPDFSSRSR) directs the protein to the chloroplast.

It belongs to the allene oxide cyclase family. In terms of tissue distribution, highly expressed in fully developed leaves.

The protein localises to the plastid. Its subcellular location is the chloroplast. It catalyses the reaction (9Z,13S,15Z)-12,13-epoxyoctadeca-9,11,15-trienoate = (9S,13S,15Z)-12-oxophyto-10,15-dienoate. In terms of biological role, involved in the production of 12-oxo-phytodienoic acid (OPDA), a precursor of jasmonic acid. This is Allene oxide cyclase 3, chloroplastic (AOC3) from Arabidopsis thaliana (Mouse-ear cress).